A 104-amino-acid polypeptide reads, in one-letter code: Large ribosomal subunit protein bL21 (104 aa).

Belongs to the bacterial ribosomal protein bL21 family. Part of the 50S ribosomal subunit. Contacts protein L20.

Its function is as follows. This protein binds to 23S rRNA in the presence of protein L20. This is Large ribosomal subunit protein bL21 from Helicobacter pylori (strain J99 / ATCC 700824) (Campylobacter pylori J99).